A 150-amino-acid polypeptide reads, in one-letter code: Ribosome maturation factor RimP (150 aa).

It belongs to the RimP family.

The protein resides in the cytoplasm. Required for maturation of 30S ribosomal subunits. This chain is Ribosome maturation factor RimP, found in Methylococcus capsulatus (strain ATCC 33009 / NCIMB 11132 / Bath).